Here is a 286-residue protein sequence, read N- to C-terminus: Meteorin-like protein (286 aa).

The N-terminal stretch at 1-20 is a signal peptide; the sequence is MLRRGLLSFFMVILIDRGTS. Cystine bridges form between Cys-28-Cys-51, Cys-84-Cys-120, Cys-165-Cys-235, Cys-168-Cys-259, and Cys-178-Cys-281. N-linked (GlcNAc...) asparagine glycosylation is present at Asn-203.

Belongs to the meteorin family.

The protein resides in the secreted. Hormone induced following exercise or cold exposure that promotes energy expenditure. Induced either in the skeletal muscle after exercise or in adipose tissue following cold exposure and is present in the circulation. Able to stimulate energy expenditure associated with the browning of the white fat depots and improves glucose tolerance. The chain is Meteorin-like protein (metrnl) from Xenopus laevis (African clawed frog).